Reading from the N-terminus, the 193-residue chain is Threonylcarbamoyl-AMP synthase (193 aa).

Positions 14–193 (SRLQQRARKQ…IDLESGRVLR (180 aa)) constitute a YrdC-like domain.

Belongs to the SUA5 family. TsaC subfamily.

The protein resides in the cytoplasm. The enzyme catalyses L-threonine + hydrogencarbonate + ATP = L-threonylcarbamoyladenylate + diphosphate + H2O. Required for the formation of a threonylcarbamoyl group on adenosine at position 37 (t(6)A37) in tRNAs that read codons beginning with adenine. Catalyzes the conversion of L-threonine, HCO(3)(-)/CO(2) and ATP to give threonylcarbamoyl-AMP (TC-AMP) as the acyladenylate intermediate, with the release of diphosphate. The sequence is that of Threonylcarbamoyl-AMP synthase from Chromobacterium violaceum (strain ATCC 12472 / DSM 30191 / JCM 1249 / CCUG 213 / NBRC 12614 / NCIMB 9131 / NCTC 9757 / MK).